The following is a 358-amino-acid chain: Peptide chain release factor 1 (358 aa).

Gln-234 is modified (N5-methylglutamine).

It belongs to the prokaryotic/mitochondrial release factor family. In terms of processing, methylated by PrmC. Methylation increases the termination efficiency of RF1.

The protein localises to the cytoplasm. Peptide chain release factor 1 directs the termination of translation in response to the peptide chain termination codons UAG and UAA. The sequence is that of Peptide chain release factor 1 from Chloroherpeton thalassium (strain ATCC 35110 / GB-78).